Here is a 106-residue protein sequence, read N- to C-terminus: Iron-sulfur cluster assembly protein CyaY (106 aa).

Belongs to the frataxin family.

In terms of biological role, involved in iron-sulfur (Fe-S) cluster assembly. May act as a regulator of Fe-S biogenesis. In Salmonella dublin (strain CT_02021853), this protein is Iron-sulfur cluster assembly protein CyaY.